Here is an 839-residue protein sequence, read N- to C-terminus: MEGGPLEPLEDLSGIEENSIIPLDSILPPELFLIPIKSRPVFPGIITPLIVPSGKFAKAVEETVKGNSFLGLVLLKDEENEKETSENIYQYGVVAKILKKVNLPDNAVNILVNTIRRFKIESFVNKDPLVARVSYPEEEPGAPKNTTKAMMRTLLVMTRELAQNNPLFTEEMKLTMLNVNEPGKMADFVCSILNLEKEEYQSVIESNILKTRIEKVLLFLKKEIELVSIQREISDQIQDKIDKQQRQFFLREQLKAIQNELGIKDDKFEKKYEKFLERLKNLNADPEVIEEVTRELDKFSYADPNTGDYNVIRNYLDILESLPWEPAPVREIDLEKAKKTLDKDHYKLEDVKDRILEFLAVKKLKNDEKGTILLLVGPPGVGKTSIARSIAEAMGRKFFRFSVGGMRDEAEIKGHRRTYIGSMPGKIISALRITKERDCVILLDEIDKLSIGIQGDPASALLEVLDPEQNKNFRDHYLDLPFDISNVFFIATANTLDSISRILLDRMEIINLSGYITDEKVQIFQKYLWKKVLYKNGVTPYGIEFDKKAIVALIDSYSRESGVRGLEKVTDKLVRKIAIKIVRKESFPKIIQEKDLETFLGVPKFTDERMVRASVPGTALGLAWTSVGGATLLIEALFVKGKGGILLTGMLGKTMEESSNIALSYIKNLLYKEELFNNRMIHLHVPDGATPKDGPSAGITMASAILSLALNTKVKSGFGMTGELTLTGEVLAIGGLREKIVAAKRVGIHKIIYPKDNLQHLQEIPDYVKKGMYFFPVSRYEEVALLLFDEKVISKINPSFRENLKSIVNPTRKLSPKKKTTQKQKLSLSKQKGNNQKKK.

The 194-residue stretch at 31 to 224 (LFLIPIKSRP…KVLLFLKKEI (194 aa)) folds into the Lon N-terminal domain. Residue 377–384 (GPPGVGKT) participates in ATP binding. A Lon proteolytic domain is found at 613-790 (ASVPGTALGL…EEVALLLFDE (178 aa)). Residues S696 and K739 contribute to the active site. The tract at residues 807-839 (IVNPTRKLSPKKKTTQKQKLSLSKQKGNNQKKK) is disordered. The segment covering 823–832 (KQKLSLSKQK) has biased composition (low complexity).

The protein belongs to the peptidase S16 family. As to quaternary structure, homohexamer. Organized in a ring with a central cavity.

It is found in the cytoplasm. It catalyses the reaction Hydrolysis of proteins in presence of ATP.. Its function is as follows. ATP-dependent serine protease that mediates the selective degradation of mutant and abnormal proteins as well as certain short-lived regulatory proteins. Required for cellular homeostasis and for survival from DNA damage and developmental changes induced by stress. Degrades polypeptides processively to yield small peptide fragments that are 5 to 10 amino acids long. Binds to DNA in a double-stranded, site-specific manner. In Leptospira interrogans serogroup Icterohaemorrhagiae serovar copenhageni (strain Fiocruz L1-130), this protein is Lon protease.